We begin with the raw amino-acid sequence, 381 residues long: Succinyl-diaminopimelate desuccinylase (381 aa).

H72 is a Zn(2+) binding site. D74 is an active-site residue. D105 is a Zn(2+) binding site. E139 serves as the catalytic Proton acceptor. Zn(2+) contacts are provided by E140, E168, and H354.

It belongs to the peptidase M20A family. DapE subfamily. In terms of assembly, homodimer. Zn(2+) serves as cofactor. The cofactor is Co(2+).

The enzyme catalyses N-succinyl-(2S,6S)-2,6-diaminopimelate + H2O = (2S,6S)-2,6-diaminopimelate + succinate. Its pathway is amino-acid biosynthesis; L-lysine biosynthesis via DAP pathway; LL-2,6-diaminopimelate from (S)-tetrahydrodipicolinate (succinylase route): step 3/3. Functionally, catalyzes the hydrolysis of N-succinyl-L,L-diaminopimelic acid (SDAP), forming succinate and LL-2,6-diaminopimelate (DAP), an intermediate involved in the bacterial biosynthesis of lysine and meso-diaminopimelic acid, an essential component of bacterial cell walls. This Shewanella sp. (strain MR-4) protein is Succinyl-diaminopimelate desuccinylase.